A 361-amino-acid polypeptide reads, in one-letter code: Phospho-N-acetylmuramoyl-pentapeptide-transferase (361 aa).

10 consecutive transmembrane segments (helical) span residues 25-45 (RTVL…PAMI), 73-93 (TMGG…WADL), 97-117 (YVWI…VDDY), 134-154 (LFWQ…TAEL), 168-188 (VAVP…IVGT), 200-220 (GLAI…SYVA), 237-257 (AGEL…FLWF), 264-284 (VFMG…VTVI), 289-309 (IVML…MLQV), and 338-358 (QVVV…LSSL).

The protein belongs to the glycosyltransferase 4 family. MraY subfamily. It depends on Mg(2+) as a cofactor.

It localises to the cell inner membrane. It carries out the reaction UDP-N-acetyl-alpha-D-muramoyl-L-alanyl-gamma-D-glutamyl-meso-2,6-diaminopimeloyl-D-alanyl-D-alanine + di-trans,octa-cis-undecaprenyl phosphate = di-trans,octa-cis-undecaprenyl diphospho-N-acetyl-alpha-D-muramoyl-L-alanyl-D-glutamyl-meso-2,6-diaminopimeloyl-D-alanyl-D-alanine + UMP. The protein operates within cell wall biogenesis; peptidoglycan biosynthesis. In terms of biological role, catalyzes the initial step of the lipid cycle reactions in the biosynthesis of the cell wall peptidoglycan: transfers peptidoglycan precursor phospho-MurNAc-pentapeptide from UDP-MurNAc-pentapeptide onto the lipid carrier undecaprenyl phosphate, yielding undecaprenyl-pyrophosphoryl-MurNAc-pentapeptide, known as lipid I. The polypeptide is Phospho-N-acetylmuramoyl-pentapeptide-transferase (Nitrosospira multiformis (strain ATCC 25196 / NCIMB 11849 / C 71)).